The sequence spans 207 residues: Cilia- and flagella-associated protein 418 (207 aa).

The segment at Met-1–Asn-75 is required for interaction with FAM161A. Residues Met-26–Arg-52 are disordered. Basic and acidic residues predominate over residues Ser-39 to Arg-52.

In terms of assembly, interacts (via N-terminus) with FAM161A (via central region); the interaction is direct. As to expression, widely expressed, with highest levels in heart and brain. Also expressed in the retina (at protein level).

The protein resides in the cytoplasm. Its subcellular location is the photoreceptor inner segment. May be involved in photoreceptor outer segment disk morphogenesis. In Homo sapiens (Human), this protein is Cilia- and flagella-associated protein 418.